The following is a 306-amino-acid chain: Apolipoprotein E (306 aa).

The signal sequence occupies residues 1–18 (MKVLWAVLVVTLLAGCQA). Repeat copies occupy residues 81–102 (VLME…QELG), 103–124 (PMAE…ARLG), 125–146 (ADME…TMLG), 147–168 (QSAE…KRLL), 169–190 (RDAE…EGAE), 191–212 (RGVS…LRAA), 213–230 (QTSQ…ERLR), and 231–252 (GRLE…EQME). An 8 X 22 AA approximate tandem repeats region spans residues 81–252 (VLMEDTMKEV…RLDVVREQME (172 aa)). Met-144 is modified (methionine sulfoxide). Residue Ser-148 is modified to Phosphoserine. The segment at 159–169 (HLRKLRKRLLR) is LDL and other lipoprotein receptors binding. 163-166 (LRKR) is a binding site for heparin. Residues 211–280 (AAQTSQPLRE…GWFEPVVEDM (70 aa)) form a lipid-binding and lipoprotein association region. Heparin is bound at residue 226–233 (GERLRGRL). Positions 268 to 280 (RLKGWFEPVVEDM) are specificity for association with VLDL.

It belongs to the apolipoprotein A1/A4/E family. In terms of assembly, homotetramer. May interact with ABCA1; functionally associated with ABCA1 in the biogenesis of HDLs. May interact with APP/A4 amyloid-beta peptide; the interaction is extremely stable in vitro but its physiological significance is unclear. May interact with MAPT. May interact with MAP2. In the cerebrospinal fluid, interacts with secreted SORL1. Interacts with PMEL; this allows the loading of PMEL luminal fragment on ILVs to induce fibril nucleation. APOE exists as multiple glycosylated and sialylated glycoforms within cells and in plasma. The extent of glycosylation and sialylation are tissue and context specific. In terms of processing, glycated in plasma VLDL. Post-translationally, phosphorylated by FAM20C in the extracellular medium.

Its subcellular location is the secreted. The protein localises to the extracellular space. It is found in the extracellular matrix. It localises to the extracellular vesicle. The protein resides in the endosome. Its subcellular location is the multivesicular body. In terms of biological role, APOE is an apolipoprotein, a protein associating with lipid particles, that mainly functions in lipoprotein-mediated lipid transport between organs via the plasma and interstitial fluids. APOE is a core component of plasma lipoproteins and is involved in their production, conversion and clearance. Apolipoproteins are amphipathic molecules that interact both with lipids of the lipoprotein particle core and the aqueous environment of the plasma. As such, APOE associates with chylomicrons, chylomicron remnants, very low density lipoproteins (VLDL) and intermediate density lipoproteins (IDL) but shows a preferential binding to high-density lipoproteins (HDL). It also binds a wide range of cellular receptors including the LDL receptor/LDLR, the LDL receptor-related proteins LRP1, LRP2 and LRP8 and the very low-density lipoprotein receptor/VLDLR that mediate the cellular uptake of the APOE-containing lipoprotein particles. Finally, APOE also has a heparin-binding activity and binds heparan-sulfate proteoglycans on the surface of cells, a property that supports the capture and the receptor-mediated uptake of APOE-containing lipoproteins by cells. A main function of APOE is to mediate lipoprotein clearance through the uptake of chylomicrons, VLDLs, and HDLs by hepatocytes. APOE is also involved in the biosynthesis by the liver of VLDLs as well as their uptake by peripheral tissues ensuring the delivery of triglycerides and energy storage in muscle, heart and adipose tissues. By participating in the lipoprotein-mediated distribution of lipids among tissues, APOE plays a critical role in plasma and tissues lipid homeostasis. APOE is also involved in two steps of reverse cholesterol transport, the HDLs-mediated transport of cholesterol from peripheral tissues to the liver, and thereby plays an important role in cholesterol homeostasis. First, it is functionally associated with ABCA1 in the biogenesis of HDLs in tissues. Second, it is enriched in circulating HDLs and mediates their uptake by hepatocytes. APOE also plays an important role in lipid transport in the central nervous system, regulating neuron survival and sprouting. The protein is Apolipoprotein E (APOE) of Hystrix brachyura (Malayan porcupine).